The following is a 326-amino-acid chain: Metallophosphoesterase domain-containing protein 1 (326 aa).

It belongs to the UPF0046 family.

Functionally, may have metallophosphoesterase activity (in vitro). The chain is Metallophosphoesterase domain-containing protein 1 (Mpped1) from Mus musculus (Mouse).